The primary structure comprises 231 residues: Large ribosomal subunit protein uL1 (231 aa).

The protein belongs to the universal ribosomal protein uL1 family. Part of the 50S ribosomal subunit.

Binds directly to 23S rRNA. The L1 stalk is quite mobile in the ribosome, and is involved in E site tRNA release. Its function is as follows. Protein L1 is also a translational repressor protein, it controls the translation of the L11 operon by binding to its mRNA. The sequence is that of Large ribosomal subunit protein uL1 from Cupriavidus pinatubonensis (strain JMP 134 / LMG 1197) (Cupriavidus necator (strain JMP 134)).